A 553-amino-acid polypeptide reads, in one-letter code: Glycine betaine/proline/choline transporter VP1723 (553 aa).

Helical transmembrane passes span Asn-43–Phe-63, Phe-85–Leu-105, Ala-122–Val-142, Trp-191–Phe-211, Val-231–Leu-251, Thr-278–Leu-298, Met-310–Leu-330, Trp-362–Ala-382, Phe-393–Gly-413, Val-443–Ile-463, Val-490–Ala-510, and Met-515–Ile-535.

It belongs to the BCCT transporter (TC 2.A.15) family.

It localises to the cell inner membrane. In terms of biological role, involved in the uptake of osmoprotectants. Can transport glycine betaine, proline and choline. In Vibrio parahaemolyticus serotype O3:K6 (strain RIMD 2210633), this protein is Glycine betaine/proline/choline transporter VP1723.